A 389-amino-acid chain; its full sequence is Serpin B13 (389 aa).

The protein belongs to the serpin family. Ov-serpin subfamily.

The protein localises to the cytoplasm. In terms of biological role, may play a role in the proliferation or differentiation of keratinocytes. This chain is Serpin B13 (Serpinb13), found in Mus musculus (Mouse).